Here is a 184-residue protein sequence, read N- to C-terminus: Gremlin-1 (184 aa).

Residues 1 to 24 (MNRTAYTVGALLLLLGTLLPTAEG) form the signal peptide. Residues 23–77 (EGKKKGSQGAIPPPDKAQHNDSEQTQSPPQPGSRTRGRGQGRGTAMPGEEVLESS) form a disordered region. Asn42 carries N-linked (GlcNAc...) asparagine glycosylation. Cystine bridges form between Cys94/Cys144, Cys108/Cys158, Cys118/Cys176, and Cys122/Cys178. One can recognise a CTCK domain in the interval 94–184 (CKTQPLKQTI…QCRCISIDLD (91 aa)).

The protein belongs to the DAN family. Homodimer; can also form homooligomers. Interacts with BMP2; can form higher oligomers with BMP2. Interacts with SLIT1 and SLIT2 in a glycosylation-dependent manner. As to expression, highly expressed in spleen and to a lesser extent in lung, skeletal muscle and kidney. Expressed only in non-transformed cells or primary fibroblasts in culture but not in established transformed or tumor derived cell lines. Broadly expressed in limb bud mesenchyme but restricted to the distal limb bud mesenchyme and concentrated posteriorly. Expressed in ovary especially in granulosa cells of follicles of type 4.

It is found in the secreted. In terms of biological role, cytokine that may play an important role during carcinogenesis and metanephric kidney organogenesis, as BMP a antagonist required for early limb outgrowth and patterning in maintaining the FGF4-SHH feedback loop. Down-regulates the BMP4 signaling in a dose-dependent manner. Antagonist of BMP2; inhibits BMP2-mediated differentiation of osteoblasts (in vitro). Acts as inhibitor of monocyte chemotaxis. This chain is Gremlin-1 (Grem1), found in Mus musculus (Mouse).